The chain runs to 180 residues: Inner membrane-spanning protein YciB (180 aa).

The next 5 helical transmembrane spans lie at I22 to L42, M50 to S70, L72 to S92, L121 to L141, and F149 to I169.

The protein belongs to the YciB family.

It localises to the cell inner membrane. Its function is as follows. Plays a role in cell envelope biogenesis, maintenance of cell envelope integrity and membrane homeostasis. The polypeptide is Inner membrane-spanning protein YciB (Yersinia pseudotuberculosis serotype O:1b (strain IP 31758)).